Here is a 334-residue protein sequence, read N- to C-terminus: Transcription initiation factor IIB (334 aa).

The segment at 34–65 adopts a TFIIB-type zinc-finger fold; sequence TESVCPECKSRQLVHDYERAELVCQNCGLVID. Zn(2+) is bound by residues Cys-38, Cys-41, Cys-57, and Cys-60. Tandem repeats lie at residues 151–234 and 245–326.

Belongs to the TFIIB family.

Functionally, stabilizes TBP binding to an archaeal box-A promoter. Also responsible for recruiting RNA polymerase II to the pre-initiation complex (DNA-TBP-TFIIB). This Methanosphaerula palustris (strain ATCC BAA-1556 / DSM 19958 / E1-9c) protein is Transcription initiation factor IIB.